The sequence spans 258 residues: MAKYQGEVQSLKLDDDSVIEGVSDQVLVAVVVSFALIATLVYALFRNVHQNIHPENQELVRVLREQLQTEQDAPAATRQQFYTDMYCPICLHQASFPVETNCGHLFCGACIIAYWRYGSWLGAISCPICRQTVTLLLTVFGEDDQSQDVLRLHQDINDYNRRFSGQPRSIMERIMDLPTLLRHAFREMFSVGGLFWMFRIRIILCLMGAFFYLISPLDFVPEALFGILGFLDDFFVIFLLLIYISIMYREVITQRLTR.

Residues 1 to 24 are Lumenal-facing; that stretch reads MAKYQGEVQSLKLDDDSVIEGVSD. The chain crosses the membrane as a helical span at residues 25–45; that stretch reads QVLVAVVVSFALIATLVYALF. The Cytoplasmic segment spans residues 46–201; that stretch reads RNVHQNIHPE…GGLFWMFRIR (156 aa). The RING-type zinc finger occupies 87–130; sequence CPICLHQASFPVETNCGHLFCGACIIAYWRYGSWLGAISCPICR. The helical transmembrane segment at 202–222 threads the bilayer; that stretch reads IILCLMGAFFYLISPLDFVPE. A223 is a topological domain (lumenal). The helical transmembrane segment at 224 to 244 threads the bilayer; it reads LFGILGFLDDFFVIFLLLIYI. Residues 245–258 are Cytoplasmic-facing; the sequence is SIMYREVITQRLTR.

As to quaternary structure, (Microbial infection) Interacts with human cytomegalovirus protein NEC2/UL50; this interaction promotes of UBA7 ubiquitination and subsequent proteasomal degradation. In terms of assembly, constitutively associated with the ERLIN1/ERLIN 2 complex. Interacts with activated ITPR1. In terms of tissue distribution, expressed in the spinal cord.

The protein resides in the endoplasmic reticulum membrane. The catalysed reaction is S-ubiquitinyl-[E2 ubiquitin-conjugating enzyme]-L-cysteine + [acceptor protein]-L-lysine = [E2 ubiquitin-conjugating enzyme]-L-cysteine + N(6)-ubiquitinyl-[acceptor protein]-L-lysine.. It functions in the pathway protein modification; protein ubiquitination. E3 ubiquitin-protein ligase that plays an essential role in stimulus-induced inositol 1,4,5-trisphosphate receptor type 1 (ITPR1) ubiquitination and degradation via the endoplasmic reticulum-associated degradation (ERAD) pathway. Also involved in ITPR1 turnover in resting cells. Selectively inhibits the TLR3-triggered innate immune response by promoting the 'Lys-48'-linked polyubiquitination and degradation of TLR3. The polypeptide is E3 ubiquitin-protein ligase RNF170 (RNF170) (Homo sapiens (Human)).